Consider the following 156-residue polypeptide: Snaclec A11 (156 aa).

Positions 1 to 23 (MGRSISVSFGLLVVFLSLSGTGA) are cleaved as a signal peptide. 3 cysteine pairs are disulfide-bonded: Cys-27–Cys-38, Cys-55–Cys-154, and Cys-129–Cys-146. The 122-residue stretch at 34–155 (YDQHCYQAVD…CGQPYRFTCE (122 aa)) folds into the C-type lectin domain.

Belongs to the snaclec family. Heterodimer; disulfide-linked. As to expression, expressed by the venom gland.

It localises to the secreted. Its function is as follows. Interferes with one step of hemostasis (modulation of platelet aggregation, or coagulation cascade, for example). This is Snaclec A11 from Macrovipera lebetinus (Levantine viper).